The sequence spans 412 residues: Ribosomal RNA large subunit methyltransferase G (412 aa).

Residues 386–412 form a disordered region; the sequence is KAEPHENGESSSDTPNPQSSLYGGVKR. Residues 394-406 are compositionally biased toward polar residues; the sequence is ESSSDTPNPQSSL.

The protein belongs to the methyltransferase superfamily. RlmG family.

It is found in the cytoplasm. It catalyses the reaction guanosine(1835) in 23S rRNA + S-adenosyl-L-methionine = N(2)-methylguanosine(1835) in 23S rRNA + S-adenosyl-L-homocysteine + H(+). In terms of biological role, specifically methylates the guanine in position 1835 (m2G1835) of 23S rRNA. The protein is Ribosomal RNA large subunit methyltransferase G of Shewanella sediminis (strain HAW-EB3).